Here is a 202-residue protein sequence, read N- to C-terminus: Matrix protein (202 aa).

Residues 9 to 31 (KNRRDEDTQKSSPASAPLDDDDL) form a disordered region. The PPXY motif motif lies at 35-38 (PPEY). The segment at 115-151 (KLRRTFIFQWADSRGPLEGEELEYSQEITWDDDTEFV) is essential for glycoprotein binding.

It belongs to the lyssavirus matrix protein family. Homomultimer. Interacts with nucleoprotein and with the cytoplasmic domain of glycoprotein. Interacts with host ATP6V1A; this interaction plays an important role in virion uncoating after viral entry.

It localises to the virion membrane. It is found in the host endomembrane system. Its subcellular location is the host cytoplasm. Plays a major role in assembly, budding and uncoating of virion after membrane fusion. Completely covers the ribonucleoprotein coil and keep it in condensed bullet-shaped form. Inhibits viral transcription and stimulates replication. Plays a major role in early induction of TRAIL-mediated apoptosis in infected neurons. Inhibits the integrated stress response (ISR) in the infected cell by blocking the formation of stress granules. The polypeptide is Matrix protein (M) (Rabies virus (strain SAD B19) (RABV)).